The sequence spans 522 residues: Peptide methionine sulfoxide reductase MsrA/MsrB (522 aa).

The Thioredoxin domain maps to 17-174; the sequence is LALGACSPKI…ALALIRDPNA (158 aa). A disulfide bridge connects residues C68 and C71. Positions 199-354 are peptide methionine sulfoxide reductase A; that stretch reads RTIYLAGGCF…PNGYCHIDIR (156 aa). C207 is a catalytic residue. The region spanning 383–506 is the MsrB domain; sequence DAELKRTLTE…NGASLKFIPL (124 aa). A disulfide bridge links C440 with C495. Catalysis depends on C495, which acts as the Nucleophile.

In the N-terminal section; belongs to the thioredoxin family. The protein in the central section; belongs to the MsrA Met sulfoxide reductase family. This sequence in the C-terminal section; belongs to the MsrB Met sulfoxide reductase family.

It carries out the reaction L-methionyl-[protein] + [thioredoxin]-disulfide + H2O = L-methionyl-(S)-S-oxide-[protein] + [thioredoxin]-dithiol. The enzyme catalyses [thioredoxin]-disulfide + L-methionine + H2O = L-methionine (S)-S-oxide + [thioredoxin]-dithiol. It catalyses the reaction L-methionyl-[protein] + [thioredoxin]-disulfide + H2O = L-methionyl-(R)-S-oxide-[protein] + [thioredoxin]-dithiol. Has an important function as a repair enzyme for proteins that have been inactivated by oxidation. Catalyzes the reversible oxidation-reduction of methionine sulfoxide in proteins to methionine. The sequence is that of Peptide methionine sulfoxide reductase MsrA/MsrB (msrAB) from Neisseria meningitidis serogroup B (strain ATCC BAA-335 / MC58).